We begin with the raw amino-acid sequence, 782 residues long: DNA repair and recombination protein RAD54-like (782 aa).

The segment covering 1–20 (MRRSLAPSQRGGQRLSSRND) has biased composition (polar residues). Residues 1–28 (MRRSLAPSQRGGQRLSSRNDFTPPLLKK) are disordered. Residues 2 to 9 (RRSLAPSQ) are required for chromatin remodeling, strand pairing activities and coupling of ATPase activity. At T22 the chain carries Phosphothreonine. Residues 168–343 (EGKRGNFNGC…FSLVNFVNPE (176 aa)) enclose the Helicase ATP-binding domain. 181 to 188 (DEMGLGKT) lines the ATP pocket. The short motif at 294–297 (DEGH) is the DEGH box element. A Helicase C-terminal domain is found at 501-658 (LLDFMLAAIR…NNESAEKHFT (158 aa)). Over residues 741 to 753 (SQKIETTPATETS) the composition is skewed to polar residues. Positions 741 to 782 (SQKIETTPATETSVEAKPEPERRKRPAMPLSDDSADEDFQGF) are disordered. Over residues 773–782 (DSADEDFQGF) the composition is skewed to acidic residues.

Belongs to the SNF2/RAD54 helicase family. Interacts (via N-terminus) with spn-A/Rad51.

Its subcellular location is the nucleus. Involved in mitotic DNA repair and meiotic recombination. Functions in the recombinational DNA repair pathway. Essential for interhomolog gene conversion (GC), but may have a less important role in intersister GC than spn-A/Rad51. In the presence of DNA, spn-A/Rad51 enhances the ATPase activity of okr/Rad54. The chain is DNA repair and recombination protein RAD54-like from Drosophila pseudoobscura pseudoobscura (Fruit fly).